Consider the following 61-residue polypeptide: ATP synthase F(0) complex subunit 8 (61 aa).

Residues 10–32 (FMILSSTWLIYTIILQPKILSHL) form a helical membrane-spanning segment.

It belongs to the ATPase protein 8 family. In terms of assembly, component of the ATP synthase complex composed at least of ATP5F1A/subunit alpha, ATP5F1B/subunit beta, ATP5MC1/subunit c (homooctomer), MT-ATP6/subunit a, MT-ATP8/subunit 8, ATP5ME/subunit e, ATP5MF/subunit f, ATP5MG/subunit g, ATP5MK/subunit k, ATP5MJ/subunit j, ATP5F1C/subunit gamma, ATP5F1D/subunit delta, ATP5F1E/subunit epsilon, ATP5PF/subunit F6, ATP5PB/subunit b, ATP5PD/subunit d, ATP5PO/subunit OSCP. ATP synthase complex consists of a soluble F(1) head domain (subunits alpha(3) and beta(3)) - the catalytic core - and a membrane F(0) domain - the membrane proton channel (subunits c, a, 8, e, f, g, k and j). These two domains are linked by a central stalk (subunits gamma, delta, and epsilon) rotating inside the F1 region and a stationary peripheral stalk (subunits F6, b, d, and OSCP).

The protein localises to the mitochondrion membrane. Its function is as follows. Subunit 8, of the mitochondrial membrane ATP synthase complex (F(1)F(0) ATP synthase or Complex V) that produces ATP from ADP in the presence of a proton gradient across the membrane which is generated by electron transport complexes of the respiratory chain. ATP synthase complex consist of a soluble F(1) head domain - the catalytic core - and a membrane F(1) domain - the membrane proton channel. These two domains are linked by a central stalk rotating inside the F(1) region and a stationary peripheral stalk. During catalysis, ATP synthesis in the catalytic domain of F(1) is coupled via a rotary mechanism of the central stalk subunits to proton translocation. In vivo, can only synthesize ATP although its ATP hydrolase activity can be activated artificially in vitro. Part of the complex F(0) domain. The sequence is that of ATP synthase F(0) complex subunit 8 from Chelonia mydas (Green sea-turtle).